The sequence spans 350 residues: Methionine import ATP-binding protein MetN (350 aa).

The ABC transporter domain occupies isoleucine 2–valine 241. Glycine 38–serine 45 provides a ligand contact to ATP.

It belongs to the ABC transporter superfamily. Methionine importer (TC 3.A.1.24) family. In terms of assembly, the complex is composed of two ATP-binding proteins (MetN), two transmembrane proteins (MetI) and a solute-binding protein (MetQ).

The protein resides in the cell inner membrane. The catalysed reaction is L-methionine(out) + ATP + H2O = L-methionine(in) + ADP + phosphate + H(+). It carries out the reaction D-methionine(out) + ATP + H2O = D-methionine(in) + ADP + phosphate + H(+). Its function is as follows. Part of the ABC transporter complex MetNIQ involved in methionine import. Responsible for energy coupling to the transport system. The sequence is that of Methionine import ATP-binding protein MetN from Francisella tularensis subsp. holarctica (strain LVS).